A 166-amino-acid polypeptide reads, in one-letter code: Succinate dehydrogenase assembly factor 2, mitochondrial (166 aa).

The N-terminal 29 residues, 1 to 29 (MAVVAVFPALARMLAVSRRRLVSPSLSMT), are a transit peptide targeting the mitochondrion.

It belongs to the SDHAF2 family. Interacts with SDHA within the SDH catalytic dimer.

The protein localises to the mitochondrion matrix. In terms of biological role, plays an essential role in the assembly of succinate dehydrogenase (SDH), an enzyme complex (also referred to as respiratory complex II) that is a component of both the tricarboxylic acid (TCA) cycle and the mitochondrial electron transport chain, and which couples the oxidation of succinate to fumarate with the reduction of ubiquinone (coenzyme Q) to ubiquinol. Required for flavinylation (covalent attachment of FAD) of the flavoprotein subunit SDHA of the SDH catalytic dimer. The polypeptide is Succinate dehydrogenase assembly factor 2, mitochondrial (Bos taurus (Bovine)).